Consider the following 456-residue polypeptide: UDP-N-acetylmuramate--L-alanine ligase (456 aa).

112–118 (GAHGKTT) contacts ATP.

Belongs to the MurCDEF family.

It is found in the cytoplasm. The enzyme catalyses UDP-N-acetyl-alpha-D-muramate + L-alanine + ATP = UDP-N-acetyl-alpha-D-muramoyl-L-alanine + ADP + phosphate + H(+). The protein operates within cell wall biogenesis; peptidoglycan biosynthesis. In terms of biological role, cell wall formation. In Desulfatibacillum aliphaticivorans, this protein is UDP-N-acetylmuramate--L-alanine ligase.